Here is a 480-residue protein sequence, read N- to C-terminus: ATP synthase subunit beta (480 aa).

Gly-154 to Thr-161 contacts ATP.

Belongs to the ATPase alpha/beta chains family. F-type ATPases have 2 components, CF(1) - the catalytic core - and CF(0) - the membrane proton channel. CF(1) has five subunits: alpha(3), beta(3), gamma(1), delta(1), epsilon(1). CF(0) has four main subunits: a(1), b(1), b'(1) and c(9-12).

The protein resides in the cell inner membrane. It catalyses the reaction ATP + H2O + 4 H(+)(in) = ADP + phosphate + 5 H(+)(out). In terms of biological role, produces ATP from ADP in the presence of a proton gradient across the membrane. The catalytic sites are hosted primarily by the beta subunits. The polypeptide is ATP synthase subunit beta (Bradyrhizobium sp. (strain ORS 278)).